The primary structure comprises 375 residues: uncharacterized protein (375 aa).

Lysine 99 is covalently cross-linked (Isoglutamyl lysine isopeptide (Lys-Gln) (interchain with Q-Cter in protein Pup)).

Belongs to the IMPDH/GMPR family.

This is an uncharacterized protein from Mycolicibacterium smegmatis (strain ATCC 700084 / mc(2)155) (Mycobacterium smegmatis).